Consider the following 690-residue polypeptide: Protein arginine N-methyltransferase 7 (690 aa).

SAM-dependent MTase PRMT-type domains lie at 5-355 and 364-690; these read FQDS…FSLW and KEPL…EEEQ.

It belongs to the class I-like SAM-binding methyltransferase superfamily. Protein arginine N-methyltransferase family. PRMT7 subfamily.

Functionally, essential arginine methyltransferase that can both catalyze the formation of omega-N monomethylarginine (MMA) and symmetrical dimethylarginine (sDMA). Specifically mediates the symmetrical dimethylation of arginine residues in the small nuclear ribonucleoproteins SmD1 and SmD3. The protein is Protein arginine N-methyltransferase 7 (Art7) of Anopheles gambiae (African malaria mosquito).